The chain runs to 273 residues: Dermonecrotic toxin LspaSicTox-alphaIA2i (273 aa).

His5 is an active-site residue. Mg(2+) is bound by residues Glu25 and Asp27. The active-site Nucleophile is the His41. 2 cysteine pairs are disulfide-bonded: Cys45/Cys51 and Cys47/Cys190. Mg(2+) is bound at residue Asp85.

It belongs to the arthropod phospholipase D family. Class II subfamily. It depends on Mg(2+) as a cofactor. In terms of tissue distribution, expressed by the venom gland.

It is found in the secreted. It catalyses the reaction an N-(acyl)-sphingosylphosphocholine = an N-(acyl)-sphingosyl-1,3-cyclic phosphate + choline. The enzyme catalyses an N-(acyl)-sphingosylphosphoethanolamine = an N-(acyl)-sphingosyl-1,3-cyclic phosphate + ethanolamine. It carries out the reaction a 1-acyl-sn-glycero-3-phosphocholine = a 1-acyl-sn-glycero-2,3-cyclic phosphate + choline. The catalysed reaction is a 1-acyl-sn-glycero-3-phosphoethanolamine = a 1-acyl-sn-glycero-2,3-cyclic phosphate + ethanolamine. Its function is as follows. Dermonecrotic toxins cleave the phosphodiester linkage between the phosphate and headgroup of certain phospholipids (sphingolipid and lysolipid substrates), forming an alcohol (often choline) and a cyclic phosphate. This toxin acts on sphingomyelin (SM). It may also act on ceramide phosphoethanolamine (CPE), lysophosphatidylcholine (LPC) and lysophosphatidylethanolamine (LPE), but not on lysophosphatidylserine (LPS), and lysophosphatidylglycerol (LPG). It acts by transphosphatidylation, releasing exclusively cyclic phosphate products as second products. Induces dermonecrosis, hemolysis, increased vascular permeability, edema, inflammatory response, and platelet aggregation. This is Dermonecrotic toxin LspaSicTox-alphaIA2i from Loxosceles spadicea (Recluse spider).